Consider the following 200-residue polypeptide: Small ribosomal subunit protein eS8A (200 aa).

Disordered stretches follow at residues 1 to 40 (MGITRDSRHKRSATGAKRAQYRKKRKFELGRQPSNTRIGP) and 123 to 145 (SKGKKATSTPNPKSKHVQRKHSA). The span at 135-145 (KSKHVQRKHSA) shows a compositional bias: basic residues.

It belongs to the eukaryotic ribosomal protein eS8 family. Component of the small ribosomal subunit (SSU). Mature yeast ribosomes consist of a small (40S) and a large (60S) subunit. The 40S small subunit contains 1 molecule of ribosomal RNA (18S rRNA) and at least 33 different proteins. The large 60S subunit contains 3 rRNA molecules (25S, 5.8S and 5S rRNA) and at least 46 different proteins.

It is found in the cytoplasm. In terms of biological role, component of the ribosome, a large ribonucleoprotein complex responsible for the synthesis of proteins in the cell. The small ribosomal subunit (SSU) binds messenger RNAs (mRNAs) and translates the encoded message by selecting cognate aminoacyl-transfer RNA (tRNA) molecules. The large subunit (LSU) contains the ribosomal catalytic site termed the peptidyl transferase center (PTC), which catalyzes the formation of peptide bonds, thereby polymerizing the amino acids delivered by tRNAs into a polypeptide chain. The nascent polypeptides leave the ribosome through a tunnel in the LSU and interact with protein factors that function in enzymatic processing, targeting, and the membrane insertion of nascent chains at the exit of the ribosomal tunnel. This chain is Small ribosomal subunit protein eS8A (rps801), found in Schizosaccharomyces pombe (strain 972 / ATCC 24843) (Fission yeast).